Reading from the N-terminus, the 138-residue chain is uncharacterized protein (138 aa).

Residues 1-73 (MCSAGQLLGG…NHTGEPVGDD (73 aa)) are disordered. Positions 7–18 (LLGGGGGGGGSG) are enriched in gly residues. A compositionally biased stretch (basic and acidic residues) spans 19–29 (GERDEDRDALA). Residues 30-43 (ERAAAGTEQESGAS) show a composition bias toward low complexity. A helical transmembrane segment spans residues 106–126 (VIVIFFWVMLWFLGLPAFGLV).

This sequence belongs to the FAM241 family.

The protein resides in the membrane. This is an uncharacterized protein from Bos taurus (Bovine).